Here is a 185-residue protein sequence, read N- to C-terminus: Probable DNA-directed RNA polymerase subunit delta (185 aa).

In terms of domain architecture, HTH HARE-type spans 14–81; sequence LSMIEVAHAI…GDNTWGLRAW (68 aa). Residues 90 to 185 form a disordered region; the sequence is ATVGENEEDE…DEEDEDEDDE (96 aa). Composition is skewed to acidic residues over residues 117-167 and 175-185; these read DTDD…DDGI and HDEEDEDEDDE.

This sequence belongs to the RpoE family. As to quaternary structure, RNAP is composed of a core of 2 alpha, a beta and a beta' subunits. The core is associated with a delta subunit and one of several sigma factors.

Its function is as follows. Participates in both the initiation and recycling phases of transcription. In the presence of the delta subunit, RNAP displays an increased specificity of transcription, a decreased affinity for nucleic acids, and an increased efficiency of RNA synthesis because of enhanced recycling. The chain is Probable DNA-directed RNA polymerase subunit delta from Limosilactobacillus reuteri (strain DSM 20016) (Lactobacillus reuteri).